Consider the following 388-residue polypeptide: Tryptophan synthase beta chain (388 aa).

An N6-(pyridoxal phosphate)lysine modification is found at Lys86.

The protein belongs to the TrpB family. In terms of assembly, tetramer of two alpha and two beta chains. Requires pyridoxal 5'-phosphate as cofactor.

It carries out the reaction (1S,2R)-1-C-(indol-3-yl)glycerol 3-phosphate + L-serine = D-glyceraldehyde 3-phosphate + L-tryptophan + H2O. It functions in the pathway amino-acid biosynthesis; L-tryptophan biosynthesis; L-tryptophan from chorismate: step 5/5. Functionally, the beta subunit is responsible for the synthesis of L-tryptophan from indole and L-serine. This Buchnera aphidicola subsp. Acyrthosiphon pisum (strain APS) (Acyrthosiphon pisum symbiotic bacterium) protein is Tryptophan synthase beta chain (trpB).